The following is a 76-amino-acid chain: Adropin (76 aa).

A signal peptide spans methionine 1 to alanine 33. Residues valine 41–proline 76 are disordered. Positions serine 52 to lysine 65 are enriched in pro residues.

As to expression, expressed in liver and brain.

Its subcellular location is the secreted. Involved in the regulation of glucose homeostasis and lipid metabolism. The sequence is that of Adropin (ENHO) from Homo sapiens (Human).